Reading from the N-terminus, the 691-residue chain is Elongation factor G (691 aa).

In terms of domain architecture, tr-type G spans 8-283; the sequence is KKVRNIGIAA…AVVAYLPAPD (276 aa). GTP is bound by residues 17–24, 81–85, and 135–138; these read AHIDAGKT, DTPGH, and NKMD.

Belongs to the TRAFAC class translation factor GTPase superfamily. Classic translation factor GTPase family. EF-G/EF-2 subfamily.

It is found in the cytoplasm. Functionally, catalyzes the GTP-dependent ribosomal translocation step during translation elongation. During this step, the ribosome changes from the pre-translocational (PRE) to the post-translocational (POST) state as the newly formed A-site-bound peptidyl-tRNA and P-site-bound deacylated tRNA move to the P and E sites, respectively. Catalyzes the coordinated movement of the two tRNA molecules, the mRNA and conformational changes in the ribosome. The polypeptide is Elongation factor G (Campylobacter jejuni subsp. jejuni serotype O:23/36 (strain 81-176)).